The primary structure comprises 479 residues: Ribulose bisphosphate carboxylase large chain (479 aa).

The propeptide occupies 1–2 (MS). Substrate contacts are provided by N123 and T173. The active-site Proton acceptor is the K175. K177 contributes to the substrate binding site. Residues K201, D203, and E204 each coordinate Mg(2+). K201 is subject to N6-carboxylysine. The residue at position 208 (S208) is a Phosphoserine. Residue H294 is the Proton acceptor of the active site. The substrate site is built by R295 and H327. Phosphothreonine is present on T330. S379 contributes to the substrate binding site.

Belongs to the RuBisCO large chain family. Type I subfamily. As to quaternary structure, heterohexadecamer of 8 large chains and 8 small chains; disulfide-linked. The disulfide link is formed within the large subunit homodimers. Mg(2+) is required as a cofactor. In terms of processing, the disulfide bond which can form in the large chain dimeric partners within the hexadecamer appears to be associated with oxidative stress and protein turnover.

The protein resides in the plastid. It localises to the chloroplast. It carries out the reaction 2 (2R)-3-phosphoglycerate + 2 H(+) = D-ribulose 1,5-bisphosphate + CO2 + H2O. The enzyme catalyses D-ribulose 1,5-bisphosphate + O2 = 2-phosphoglycolate + (2R)-3-phosphoglycerate + 2 H(+). Functionally, ruBisCO catalyzes two reactions: the carboxylation of D-ribulose 1,5-bisphosphate, the primary event in carbon dioxide fixation, as well as the oxidative fragmentation of the pentose substrate in the photorespiration process. Both reactions occur simultaneously and in competition at the same active site. This is Ribulose bisphosphate carboxylase large chain from Capsella bursa-pastoris (Shepherd's purse).